The sequence spans 293 residues: Beta-porphyranase B (293 aa).

A signal peptide spans 1–21; that stretch reads MKLSNQFLITITLLITSITFA. Positions 38–291 constitute a GH16 domain; sequence QEWKLIENMS…WVRSWQLVDS (254 aa). Positions 67, 70, 156, 161, and 256 each coordinate substrate. Catalysis depends on Glu156, which acts as the Nucleophile. The active-site Proton donor is the Glu161.

This sequence belongs to the glycosyl hydrolase 16 family.

It localises to the periplasm. The catalysed reaction is Hydrolysis of beta-D-galactopyranose-(1-&gt;4)-alpha-L-galactopyranose-6-sulfate linkages in porphyran.. Cleaves the sulfated polysaccharide porphyran at the (1-&gt;4) linkages between beta-D-galactopyranose and alpha-L-galactopyranose-6-sulfate, forming mostly the disaccharide alpha-L-galactopyranose-6-sulfate-(1-&gt;3)-beta-D-galactose. Some longer oligosaccharides of even number of residues are also observed. Inactive on the non-sulfated agarose portion of the porphyran backbone. In contrast to PorA, tolerates the presence of 3-6-anhydro-L-galactose in subsite -2. The chain is Beta-porphyranase B (porB) from Zobellia galactanivorans (strain DSM 12802 / CCUG 47099 / CIP 106680 / NCIMB 13871 / Dsij).